A 58-amino-acid polypeptide reads, in one-letter code: UPF0391 membrane protein Plav_0056 (58 aa).

Transmembrane regions (helical) follow at residues 4–24 (WAAV…GGLV) and 30–50 (IAQI…IFGV).

It belongs to the UPF0391 family.

It is found in the cell membrane. The polypeptide is UPF0391 membrane protein Plav_0056 (Parvibaculum lavamentivorans (strain DS-1 / DSM 13023 / NCIMB 13966)).